A 356-amino-acid chain; its full sequence is Outer spore wall protein LDS2 (356 aa).

The Cytoplasmic segment spans residues 1 to 92; it reads MSTRPQPDWY…ISESVGNSDY (92 aa). The chain crosses the membrane as a helical span at residues 93–113; that stretch reads LHLFFLIFGYYLLNLLLIVAF. Over 114–115 the chain is Extracellular; that stretch reads TS. Residues 116-136 form a helical membrane-spanning segment; sequence ILAWSLLVCIYLPFLGLFALP. Residues 137–213 are Cytoplasmic-facing; it reads LAYMQTILIS…KRFYLVSLPQ (77 aa). Residues 214–234 traverse the membrane as a helical segment; that stretch reads FFIFFFWYIFIAFMFLLLLLV. The Extracellular segment spans residues 235 to 294; sequence PIVGPITINMLPFSPGMGFYYFEPYFVDVLHLDSRKLSKVYYKGFAKWLLYSISSGLLES. Residues 295–315 traverse the membrane as a helical segment; that stretch reads IPILGGLFIGTNAVGASLWIV. Topologically, residues 316–356 are cytoplasmic; the sequence is KEIKDRDQPAVPPSPPAEPEEPTVGSYAPPIQQSIAHINPP. A disordered region spans residues 322–356; the sequence is DQPAVPPSPPAEPEEPTVGSYAPPIQQSIAHINPP. A compositionally biased stretch (polar residues) spans 346–356; that stretch reads IQQSIAHINPP.

It belongs to the LDS family.

It is found in the prospore membrane. The protein resides in the lipid droplet. Its subcellular location is the spore wall. Functionally, involved in spore wall assembly. In Saccharomyces cerevisiae (strain ATCC 204508 / S288c) (Baker's yeast), this protein is Outer spore wall protein LDS2.